Here is a 291-residue protein sequence, read N- to C-terminus: Small ribosomal subunit biogenesis GTPase RsgA 1 (291 aa).

Residues 63-221 enclose the CP-type G domain; the sequence is ENALVRPPVA…VADTPGFSSI (159 aa). GTP-binding positions include 112 to 115 and 164 to 172; these read SKMD and GQSGVGKST. The Zn(2+) site is built by Cys245, Cys250, His252, and Cys258.

It belongs to the TRAFAC class YlqF/YawG GTPase family. RsgA subfamily. As to quaternary structure, monomer. Associates with 30S ribosomal subunit, binds 16S rRNA. Zn(2+) is required as a cofactor.

The protein localises to the cytoplasm. In terms of biological role, one of several proteins that assist in the late maturation steps of the functional core of the 30S ribosomal subunit. Helps release RbfA from mature subunits. May play a role in the assembly of ribosomal proteins into the subunit. Circularly permuted GTPase that catalyzes slow GTP hydrolysis, GTPase activity is stimulated by the 30S ribosomal subunit. This is Small ribosomal subunit biogenesis GTPase RsgA 1 from Listeria monocytogenes serotype 4b (strain F2365).